The primary structure comprises 92 residues: Long neurotoxin 469 (92 aa).

Residues 1–21 form the signal peptide; the sequence is MKTLLLTLVVVTIVCLDLGDS. Disulfide bonds link C24/C41, C34/C62, C47/C51, C66/C77, and C78/C83.

It belongs to the three-finger toxin family. Long-chain subfamily. Type II alpha-neurotoxin sub-subfamily. In terms of tissue distribution, expressed by the venom gland.

It is found in the secreted. Binds with high affinity to muscular (alpha-1/CHRNA1) and neuronal (alpha-7/CHRNA7) nicotinic acetylcholine receptor (nAChR) and inhibits acetylcholine from binding to the receptor, thereby impairing neuromuscular and neuronal transmission. The polypeptide is Long neurotoxin 469 (Drysdalia coronoides (White-lipped snake)).